A 511-amino-acid chain; its full sequence is Ribose import ATP-binding protein RbsA 3 (511 aa).

ABC transporter domains lie at 21–257 (LEMR…VGRD) and 256–511 (RDVE…TGNA). Residue 53-60 (GENGAGKS) coordinates ATP.

The protein belongs to the ABC transporter superfamily. Ribose importer (TC 3.A.1.2.1) family. In terms of assembly, the complex is composed of an ATP-binding protein (RbsA), two transmembrane proteins (RbsC) and a solute-binding protein (RbsB).

The protein localises to the cell inner membrane. The enzyme catalyses D-ribose(out) + ATP + H2O = D-ribose(in) + ADP + phosphate + H(+). Part of the ABC transporter complex RbsABC involved in ribose import. Responsible for energy coupling to the transport system. This Rhizobium etli (strain ATCC 51251 / DSM 11541 / JCM 21823 / NBRC 15573 / CFN 42) protein is Ribose import ATP-binding protein RbsA 3.